A 641-amino-acid polypeptide reads, in one-letter code: 1-deoxy-D-xylulose-5-phosphate synthase (641 aa).

Thiamine diphosphate is bound by residues His-79 and 120-122; that span reads AHS. A Mg(2+)-binding site is contributed by Asp-151. Residues 152–153, Asn-180, Tyr-290, and Glu-372 contribute to the thiamine diphosphate site; that span reads GS. Asn-180 lines the Mg(2+) pocket.

It belongs to the transketolase family. DXPS subfamily. As to quaternary structure, homodimer. Requires Mg(2+) as cofactor. Thiamine diphosphate is required as a cofactor.

The catalysed reaction is D-glyceraldehyde 3-phosphate + pyruvate + H(+) = 1-deoxy-D-xylulose 5-phosphate + CO2. It functions in the pathway metabolic intermediate biosynthesis; 1-deoxy-D-xylulose 5-phosphate biosynthesis; 1-deoxy-D-xylulose 5-phosphate from D-glyceraldehyde 3-phosphate and pyruvate: step 1/1. In terms of biological role, catalyzes the acyloin condensation reaction between C atoms 2 and 3 of pyruvate and glyceraldehyde 3-phosphate to yield 1-deoxy-D-xylulose-5-phosphate (DXP). This chain is 1-deoxy-D-xylulose-5-phosphate synthase, found in Rhodopseudomonas palustris (strain BisB18).